Reading from the N-terminus, the 153-residue chain is 3-hydroxyacyl-[acyl-carrier-protein] dehydratase FabZ (153 aa).

Residue His-59 is part of the active site.

The protein belongs to the thioester dehydratase family. FabZ subfamily.

The protein resides in the cytoplasm. It carries out the reaction a (3R)-hydroxyacyl-[ACP] = a (2E)-enoyl-[ACP] + H2O. Functionally, involved in unsaturated fatty acids biosynthesis. Catalyzes the dehydration of short chain beta-hydroxyacyl-ACPs and long chain saturated and unsaturated beta-hydroxyacyl-ACPs. The polypeptide is 3-hydroxyacyl-[acyl-carrier-protein] dehydratase FabZ (Thermosynechococcus vestitus (strain NIES-2133 / IAM M-273 / BP-1)).